We begin with the raw amino-acid sequence, 1133 residues long: Envelopment polyprotein (1133 aa).

A signal peptide spans 1–17 (MWSLLLLAALVGQGFAL). The Lumenal segment spans residues 18–484 (KNVFDMRIQC…PGFHGWATAA (467 aa)). 11 disulfides stabilise this stretch: cysteine 27/cysteine 149, cysteine 61/cysteine 155, cysteine 107/cysteine 126, cysteine 131/cysteine 136, cysteine 173/cysteine 183, cysteine 208/cysteine 245, cysteine 232/cysteine 349, cysteine 374/cysteine 433, cysteine 378/cysteine 387, cysteine 403/cysteine 422, and cysteine 450/cysteine 473. N-linked (GlcNAc...) asparagine; by host glycosylation occurs at asparagine 132. N-linked (GlcNAc...) asparagine; by host glycosylation is found at asparagine 233 and asparagine 345. Asparagine 397 is a glycosylation site (N-linked (GlcNAc...) asparagine; by host). A helical transmembrane segment spans residues 485-504 (LLITFCFGWVLIPACTLAIL). Residues 505 to 626 (LVLKFFANIL…NLFRYKSRCY (122 aa)) lie on the Cytoplasmic side of the membrane. Residues 514–531 (LHTSNQENRFKAILRKIK) form a binding to the ribonucleoprotein region. CCHC-type zinc fingers lie at residues 543–563 (CEIC…NLSC) and 568–589 (CPYC…YKVC). Binding to the ribonucleoprotein regions lie at residues 586–603 (YKVC…KKTV), 590–601 (QATHRFREDLKK), and 609–623 (GPGC…RYKS). The ITAM domain occupies 609–632 (GPGCYRTLNLFRYKSRCYILTMWT). Residues 613–616 (YRTL) carry the YxxL motif. The helical transmembrane segment at 627 to 647 (ILTMWTLLLIIESILWAASAA) threads the bilayer. Over 648–1104 (EIPLVPLWTD…WVMGIINGNW (457 aa)) the chain is Lumenal. 8 cysteine pairs are disulfide-bonded: cysteine 733–cysteine 768, cysteine 737–cysteine 775, cysteine 749–cysteine 883, cysteine 763–cysteine 894, cysteine 778–cysteine 902, cysteine 804–cysteine 813, cysteine 821–cysteine 830, and cysteine 861–cysteine 865. Residues 755–775 (YEYENSWACNPPDCPGVGTGC) are fusion loop. N-linked (GlcNAc...) asparagine; by host glycosylation occurs at asparagine 926. 5 disulfides stabilise this stretch: cysteine 968–cysteine 998, cysteine 991–cysteine 1043, cysteine 1008–cysteine 1013, cysteine 1044–cysteine 1049, and cysteine 1083–cysteine 1087. A helical membrane pass occupies residues 1105–1125 (VVLIVLCVLLLFSLILLSILC). The segment at 1120–1133 (LLSILCPVRKHKKS) is binding to the ribonucleoprotein. Over 1126 to 1133 (PVRKHKKS) the chain is Cytoplasmic.

This sequence belongs to the hantavirus envelope glycoprotein family. In terms of assembly, homodimer. Homotetramer; forms heterotetrameric Gn-Gc spikes in the pre-fusion conformation. Interacts (via C-terminus) with the nucleoprotein. Interacts with host TUFM; this interaction contributes to the virus-induced degradation of mitochondria by autophagy, which leads to degradation of host MAVS and inhibition of type I interferon (IFN) responses. Interacts with host MAP1LC3B; this interaction contributes to the virus-induced degradation of mitochondria by autophagy, which leads to degradation of host MAVS and inhibition of type I interferon (IFN) responses. As to quaternary structure, homodimer. Homotetramer; forms heterotetrameric Gn-Gc spikes in the pre-fusion conformation. Homotrimer; forms homotrimer in the post-fusion conformation at acidic pH. Interacts (via C-terminus) with the nucleoprotein. Post-translationally, envelope polyprotein precursor is quickly cleaved in vivo just after synthesis, presumably by host signal peptidase.

The protein localises to the virion membrane. The protein resides in the host cell surface. Its subcellular location is the host Golgi apparatus membrane. It is found in the host endoplasmic reticulum membrane. It localises to the host mitochondrion. In terms of biological role, forms homotetramers with glycoprotein C at the surface of the virion. Attaches the virion to host cell receptors including integrin ITGAV/ITGB3. This attachment induces virion internalization predominantly through clathrin-dependent endocytosis. Mediates the assembly and budding of infectious virus particles through its interaction with the nucleocapsid protein and the viral genome. May dysregulate normal immune and endothelial cell responses through an ITAM motif. Translocates to mitochondria, binds to host TUFM and recruits MAP1LC3B. These interactions induce mitochondrial autophagy and therefore destruction of host MAVS leading to inhibition of type I interferon (IFN) responses. Concomitant breakdown of glycoprotein N is apparently prevented by the nucleoprotein that may inhibit Gn-stimulated autophagosome-lysosome fusion. Interacts with the viral genomic RNA. Functionally, forms homotetramers with glycoprotein N at the surface of the virion. Attaches the virion to host cell receptors including integrin ITGAV/ITGB3. This attachment induces virion internalization predominantly through clathrin-dependent endocytosis. Class II fusion protein that promotes fusion of viral membrane with host endosomal membrane after endocytosis of the virion. This chain is Envelopment polyprotein (GP), found in Homo sapiens (Human).